Reading from the N-terminus, the 291-residue chain is Nucleotide-binding protein PPA0813 (291 aa).

ATP is bound at residue 17-24 (GISGAGRR). Residue 66-69 (DVRS) participates in GTP binding.

Belongs to the RapZ-like family.

Its function is as follows. Displays ATPase and GTPase activities. This is Nucleotide-binding protein PPA0813 from Cutibacterium acnes (strain DSM 16379 / KPA171202) (Propionibacterium acnes).